A 466-amino-acid polypeptide reads, in one-letter code: Secreted RxLR effector protein 101 (466 aa).

A signal peptide spans 1-21 (MRGAYSVITALLVVASSQIAA). The RxLR-dEER motif lies at 48-63 (RYLRGSQHVHDSNEER). 2 disordered regions span residues 99–127 (KMPH…GANA) and 384–405 (RTFN…VRSS). Residues 109–121 (KVSRVTRTGKKMT) are compositionally biased toward basic residues. Polar residues predominate over residues 385-395 (TFNGNTDTASL).

The protein belongs to the RxLR effector family.

Its subcellular location is the secreted. It is found in the host nucleus. Its function is as follows. Secreted effector that partially suppresses the host cell death induced by cell death-inducing proteins. This Plasmopara viticola (Downy mildew of grapevine) protein is Secreted RxLR effector protein 101.